We begin with the raw amino-acid sequence, 242 residues long: Cysteine-rich venom protein helothermine (242 aa).

A signal peptide spans 1 to 19; the sequence is MILLSLYLCLAAMLHQSEG. One can recognise an SCP domain in the interval 41-169; that stretch reads DKHNNLRRIV…TYKYYQVCQY (129 aa). Intrachain disulfides connect Cys-77/Cys-155, Cys-94/Cys-170, Cys-150/Cys-167, Cys-189/Cys-196, Cys-192/Cys-201, Cys-205/Cys-237, Cys-214/Cys-231, and Cys-223/Cys-235. One can recognise a ShKT domain in the interval 205-237; sequence CKQNDVYNNCPDLKKQVGCGHPIMKDCMATCKC.

Belongs to the CRISP family. Expressed by the venom gland.

Its subcellular location is the secreted. Its function is as follows. Alters a variety of ion channel activities, including voltage-gated potassium channels (Kv), voltage-gated calcium channels (L-, N-, and P-type) (Cav) and ryanodine receptors (RyR). Is toxic to mice (causes lethargy, partial paralysis of rear limbs and lowering of body temperature). The sequence is that of Cysteine-rich venom protein helothermine from Heloderma horridum horridum (Mexican beaded lizard).